A 391-amino-acid chain; its full sequence is Multidrug resistance protein MdtL (391 aa).

12 consecutive transmembrane segments (helical) span residues 4–24 (FLIC…MYLV), 42–62 (IAFS…GKVA), 69–89 (PVAI…SLAE), 93–113 (LFLA…VVAF), 131–151 (LLNG…HLIM), 158–178 (SLFW…LFIL), 203–222 (FFLS…LTFV), 245–265 (ALTA…LGIF), 269–289 (TLMI…AVSP), 293–313 (VSLF…GVAM), 331–351 (LGIA…VVGI), and 356–376 (MLIG…MFVA).

Belongs to the major facilitator superfamily. DHA1 family. MdtL (TC 2.A.1.2.22) subfamily.

Its subcellular location is the cell inner membrane. Its function is as follows. Confers resistance to chloramphenicol. The sequence is that of Multidrug resistance protein MdtL from Escherichia coli (strain SMS-3-5 / SECEC).